Here is a 258-residue protein sequence, read N- to C-terminus: Tritrans,polycis-undecaprenyl-diphosphate synthase (geranylgeranyl-diphosphate specific) (258 aa).

Residue aspartate 37 is part of the active site. Aspartate 37 serves as a coordination point for Mg(2+). Residues 38-41, histidine 54, and 82-84 each bind substrate; these read GNRR and STE. Residue asparagine 85 is the Proton acceptor of the active site. Residues phenylalanine 86, arginine 88, arginine 207, and 213–215 contribute to the substrate site; that span reads RIS. A Mg(2+)-binding site is contributed by glutamate 226.

This sequence belongs to the UPP synthase family. In terms of assembly, homodimer. Requires Mg(2+) as cofactor.

It catalyses the reaction geranylgeranyl diphosphate + 7 isopentenyl diphosphate = tri-trans,hepta-cis-undecaprenyl diphosphate + 7 diphosphate. In terms of biological role, catalyzes the sequential condensation of isopentenyl diphosphate (IPP) with geranylgeranyl diphosphate (GGPP) to yield (2Z,6Z,10Z,14Z,18Z,22Z,26Z,30E,34E,38E)-undecaprenyl diphosphate (tritrans,heptacis-UPP). It is probably the precursor of glycosyl carrier lipids. This Thermoplasma acidophilum (strain ATCC 25905 / DSM 1728 / JCM 9062 / NBRC 15155 / AMRC-C165) protein is Tritrans,polycis-undecaprenyl-diphosphate synthase (geranylgeranyl-diphosphate specific).